Consider the following 197-residue polypeptide: Adenylyl-sulfate kinase (197 aa).

Residue 33-40 (GLSGSGKS) participates in ATP binding. The Phosphoserine intermediate role is filled by serine 107.

It belongs to the APS kinase family.

It catalyses the reaction adenosine 5'-phosphosulfate + ATP = 3'-phosphoadenylyl sulfate + ADP + H(+). It functions in the pathway sulfur metabolism; hydrogen sulfide biosynthesis; sulfite from sulfate: step 2/3. Functionally, catalyzes the synthesis of activated sulfate. The protein is Adenylyl-sulfate kinase of Bacillus pumilus (strain SAFR-032).